Reading from the N-terminus, the 274-residue chain is Type II restriction enzyme XamI (274 aa).

It catalyses the reaction Endonucleolytic cleavage of DNA to give specific double-stranded fragments with terminal 5'-phosphates.. A P subtype restriction enzyme that recognizes the double-stranded sequence 5'-GTCGAC-3' and cleaves after G-1. The chain is Type II restriction enzyme XamI (xamIR) from Xanthomonas campestris pv. amaranthicola.